We begin with the raw amino-acid sequence, 304 residues long: 2-phospho-L-lactate transferase (304 aa).

A 7,8-didemethyl-8-hydroxy-5-deazariboflavin-binding site is contributed by aspartate 49.

Belongs to the CofD family. Homodimer. Requires Mg(2+) as cofactor.

It carries out the reaction (2S)-lactyl-2-diphospho-5'-guanosine + 7,8-didemethyl-8-hydroxy-5-deazariboflavin = oxidized coenzyme F420-0 + GMP + H(+). It participates in cofactor biosynthesis; coenzyme F420 biosynthesis. In terms of biological role, catalyzes the transfer of the 2-phospholactate moiety from (2S)-lactyl-2-diphospho-5'-guanosine to 7,8-didemethyl-8-hydroxy-5-deazariboflavin (FO) with the formation of oxidized coenzyme F420-0 and GMP. The sequence is that of 2-phospho-L-lactate transferase from Methanocorpusculum labreanum (strain ATCC 43576 / DSM 4855 / Z).